The primary structure comprises 1582 residues: Sca1 complex scaffold protein scaA (1582 aa).

Low complexity-rich tracts occupy residues 1–14 (MSSL…TPST) and 109–131 (LSPS…TTST). 2 disordered regions span residues 1 to 22 (MSSL…TFSK) and 108 to 147 (GLSP…QIKK). One copy of the TPR 1 repeat lies at 4-37 (LDPSLSTTPSTNRRGTFSKAKSFRRAALNLEPQG). The TPR 2 repeat unit spans residues 166–199 (IYTSFPESMAFDDYMDYEESLVEWKRQVEQNLGI). Residues 246 to 349 (IKETNSSVND…PSTGSLAGFV (104 aa)) are disordered. Polar residues-rich tracts occupy residues 249-267 (TNSS…PTLR), 288-310 (NKDN…NSGI), and 318-332 (SDTS…QLDG). The residue at position 359 (Ser359) is a Phosphoserine; by PKB. Positions 400–600 (RSGSGFGMDH…QRQTSTWFRG (201 aa)) are gefA and gefH binding. Disordered regions lie at residues 468 to 493 (PKNS…GVGG) and 686 to 734 (SLSS…DKDK). 2 stretches are compositionally biased toward gly residues: residues 478–493 (GSGG…GVGG) and 694–714 (QQQG…GSGS). Residues 715–726 (GLNMSGTSGSSG) are compositionally biased toward low complexity. The stretch at 742–777 (MHSINNTTNVGTKEDRRQYTKILQTYEQRLQFSFRL) is one TPR 3 repeat. A compositionally biased stretch (gly residues) spans 864-875 (GGGSGGASGGGI). The disordered stretch occupies residues 864–978 (GGGSGGASGG…GSISTHPNTP (115 aa)). Over residues 903 to 928 (HIPSGSSLLSSPPNRQGSTGSFSFIG) the composition is skewed to low complexity. Positions 940–953 (NSSSLESPRTQSQL) are enriched in polar residues. Low complexity predominate over residues 960–972 (GSSPRSHSGGSIS). Residues 1000 to 1400 (FLDLTNEKLA…SIKKEGNLYN (401 aa)) form a pppA and pho2B binding region. A TPR 4 repeat occupies 1080–1113 (TQEVVRLVFVYYYLGIIQERLNFFSNNVGILGFV).

Component of the Sca1 complex composed of at least gefA, gefH, scaA, phr, and the protein phosphatase 2A subunits pppA and pho2B. Post-translationally, phosphorylated at Ser-359 by PKB and PKBR1 is induced by chemoattractant.

It is found in the cell membrane. In terms of biological role, component of the Sca1 complex, a regulator of cell motility, chemotaxis and signal relay. The Sca1 complex is recruited to the plasma membrane in a chemoattractant- and F-actin-dependent manner and is enriched at the leading edge of chemotaxing cells where it regulates F-actin dynamics and signal relay by controlling the activation of rasC and the downstream target of rapamycin complex 2 (TORC2)-Akt/protein kinase B (PKB) pathway. ScaA acts as a molecular scaffold, bringing together gefA, gefH and phr with PP2A. The polypeptide is Sca1 complex scaffold protein scaA (Dictyostelium discoideum (Social amoeba)).